Reading from the N-terminus, the 339-residue chain is Ribosomal RNA small subunit methyltransferase C (339 aa).

This sequence belongs to the methyltransferase superfamily. RsmC family. As to quaternary structure, monomer.

Its subcellular location is the cytoplasm. It catalyses the reaction guanosine(1207) in 16S rRNA + S-adenosyl-L-methionine = N(2)-methylguanosine(1207) in 16S rRNA + S-adenosyl-L-homocysteine + H(+). Functionally, specifically methylates the guanine in position 1207 of 16S rRNA in the 30S particle. In Aliivibrio salmonicida (strain LFI1238) (Vibrio salmonicida (strain LFI1238)), this protein is Ribosomal RNA small subunit methyltransferase C.